The following is a 664-amino-acid chain: DNA mismatch repair protein MutL (664 aa).

The protein belongs to the DNA mismatch repair MutL/HexB family.

In terms of biological role, this protein is involved in the repair of mismatches in DNA. It is required for dam-dependent methyl-directed DNA mismatch repair. May act as a 'molecular matchmaker', a protein that promotes the formation of a stable complex between two or more DNA-binding proteins in an ATP-dependent manner without itself being part of a final effector complex. The polypeptide is DNA mismatch repair protein MutL (Clostridium beijerinckii (strain ATCC 51743 / NCIMB 8052) (Clostridium acetobutylicum)).